We begin with the raw amino-acid sequence, 335 residues long: N-acetyl-gamma-glutamyl-phosphate reductase (335 aa).

Cys-156 is a catalytic residue.

It belongs to the NAGSA dehydrogenase family. Type 1 subfamily.

The protein localises to the cytoplasm. It carries out the reaction N-acetyl-L-glutamate 5-semialdehyde + phosphate + NADP(+) = N-acetyl-L-glutamyl 5-phosphate + NADPH + H(+). Its pathway is amino-acid biosynthesis; L-arginine biosynthesis; N(2)-acetyl-L-ornithine from L-glutamate: step 3/4. Catalyzes the NADPH-dependent reduction of N-acetyl-5-glutamyl phosphate to yield N-acetyl-L-glutamate 5-semialdehyde. In Tolumonas auensis (strain DSM 9187 / NBRC 110442 / TA 4), this protein is N-acetyl-gamma-glutamyl-phosphate reductase.